Consider the following 195-residue polypeptide: ATP-dependent Clp protease proteolytic subunit (195 aa).

The active-site Nucleophile is Ser-94. His-119 is an active-site residue.

The protein belongs to the peptidase S14 family. As to quaternary structure, component of the chloroplastic Clp protease core complex.

Its subcellular location is the plastid. The protein localises to the chloroplast stroma. It catalyses the reaction Hydrolysis of proteins to small peptides in the presence of ATP and magnesium. alpha-casein is the usual test substrate. In the absence of ATP, only oligopeptides shorter than five residues are hydrolyzed (such as succinyl-Leu-Tyr-|-NHMec, and Leu-Tyr-Leu-|-Tyr-Trp, in which cleavage of the -Tyr-|-Leu- and -Tyr-|-Trp bonds also occurs).. In terms of biological role, cleaves peptides in various proteins in a process that requires ATP hydrolysis. Has a chymotrypsin-like activity. Plays a major role in the degradation of misfolded proteins. The chain is ATP-dependent Clp protease proteolytic subunit from Cycas taitungensis (Prince sago).